The primary structure comprises 496 residues: Transcription termination/antitermination protein NusA (496 aa).

The S1 motif domain occupies 135–200 (GQIITGIVKK…RGAQLFISRS (66 aa)). Positions 302-370 (CHTMDIAVDI…KNLNINENII (69 aa)) constitute a KH domain. Tandem repeats lie at residues 364–414 (NINE…KSKL) and 440–490 (GMNA…RNIC). Positions 364–490 (NINENIIKIL…LLIMTARNIC (127 aa)) are 2 X 51 AA approximate repeats.

This sequence belongs to the NusA family. Monomer. Binds directly to the core enzyme of the DNA-dependent RNA polymerase and to nascent RNA.

It is found in the cytoplasm. Its function is as follows. Participates in both transcription termination and antitermination. This Buchnera aphidicola subsp. Acyrthosiphon pisum (strain APS) (Acyrthosiphon pisum symbiotic bacterium) protein is Transcription termination/antitermination protein NusA.